Here is a 715-residue protein sequence, read N- to C-terminus: Polyribonucleotide nucleotidyltransferase (715 aa).

2 residues coordinate Mg(2+): aspartate 493 and aspartate 499. One can recognise a KH domain in the interval 560–619 (PRMITVKINPEKIRDVIGKGGSVIRALTEETGTTIDISDDGVVTIASTSSEGMAEAKKRI). The 69-residue stretch at 629–697 (GQVYEGTVLK…EKGRVRLSAK (69 aa)) folds into the S1 motif domain.

The protein belongs to the polyribonucleotide nucleotidyltransferase family. Mg(2+) serves as cofactor.

It localises to the cytoplasm. The catalysed reaction is RNA(n+1) + phosphate = RNA(n) + a ribonucleoside 5'-diphosphate. In terms of biological role, involved in mRNA degradation. Catalyzes the phosphorolysis of single-stranded polyribonucleotides processively in the 3'- to 5'-direction. This is Polyribonucleotide nucleotidyltransferase from Burkholderia orbicola (strain MC0-3).